The primary structure comprises 459 residues: Cysteine--tRNA ligase (459 aa).

Cysteine 29 contacts Zn(2+). The 'HIGH' region signature appears at 31–41 (PTVYDRAHIGN). The Zn(2+) site is built by cysteine 209, histidine 234, and glutamate 238. The 'KMSKS' region signature appears at 267–271 (KMSKS). Position 270 (lysine 270) interacts with ATP.

This sequence belongs to the class-I aminoacyl-tRNA synthetase family. Monomer. Zn(2+) is required as a cofactor.

It localises to the cytoplasm. It carries out the reaction tRNA(Cys) + L-cysteine + ATP = L-cysteinyl-tRNA(Cys) + AMP + diphosphate. The chain is Cysteine--tRNA ligase from Rhodospirillum rubrum (strain ATCC 11170 / ATH 1.1.1 / DSM 467 / LMG 4362 / NCIMB 8255 / S1).